The following is an 839-amino-acid chain: NT-3 growth factor receptor (839 aa).

The first 31 residues, 1 to 31 (MDVSLCPAKCSFWRIFLLGSVWLDYVGSVLA), serve as a signal peptide directing secretion. 2 cysteine pairs are disulfide-bonded: Cys32–Cys38 and Cys36–Cys45. The Extracellular segment spans residues 32 to 429 (CPANCVCSKT…TVTHKPEEDT (398 aa)). N-linked (GlcNAc...) asparagine glycans are attached at residues Asn72 and Asn79. LRR repeat units follow at residues 104–125 (GLQK…AFAK) and 128–149 (HLRY…LFQT). Residues Asn133 and Asn163 are each glycosylated (N-linked (GlcNAc...) asparagine). Residues 160-209 (NFFNCSCDIRWMQLWQEQGEAKLNSQNLYCINADGSQLPLFRMNISQCDL) enclose the LRRCT domain. Intrachain disulfides connect Cys164–Cys189 and Cys166–Cys207. N-linked (GlcNAc...) asparagine glycosylation is found at Asn203, Asn218, Asn232, Asn259, Asn267, Asn272, and Asn294. Ig-like C2-type domains follow at residues 210–300 (PEIS…VALT) and 309–382 (SLEE…IAKN). Residues Cys231 and Cys284 are joined by a disulfide bond. Residues Cys320 and Cys362 are joined by a disulfide bond. N-linked (GlcNAc...) asparagine glycosylation is found at Asn375 and Asn388. A helical membrane pass occupies residues 430 to 453 (FGVSIAVGLAAFACVLLVVLFVMI). Residues 454–839 (NKYGRRSKFG…ATPIYLDILG (386 aa)) lie on the Cytoplasmic side of the membrane. Phosphoserine is present on Ser493. The residue at position 516 (Tyr516) is a Phosphotyrosine; by autocatalysis. The region spanning 538–839 (IVLKRELGEG…ATPIYLDILG (302 aa)) is the Protein kinase domain. ATP-binding positions include 544–552 (LGEGAFGKV) and Lys572. The active-site Proton acceptor is the Asp679. 3 positions are modified to phosphotyrosine; by autocatalysis: Tyr705, Tyr709, and Tyr710.

It belongs to the protein kinase superfamily. Tyr protein kinase family. Insulin receptor subfamily. In terms of assembly, exists in a dynamic equilibrium between monomeric (low affinity) and dimeric (high affinity) structures. Binds SH2B2. Interacts with SQSTM1 and KIDINS220. Interacts with PTPRS. Interacts with MAPK8IP3/JIP3. In terms of processing, ligand-mediated auto-phosphorylation. Widely expressed but mainly in nervous tissue. Isoform 2 is expressed at higher levels in adult brain than in fetal brain.

It is found in the membrane. It catalyses the reaction L-tyrosyl-[protein] + ATP = O-phospho-L-tyrosyl-[protein] + ADP + H(+). Receptor tyrosine kinase involved in nervous system and probably heart development. Upon binding of its ligand NTF3/neurotrophin-3, NTRK3 autophosphorylates and activates different signaling pathways, including the phosphatidylinositol 3-kinase/AKT and the MAPK pathways, that control cell survival and differentiation. The sequence is that of NT-3 growth factor receptor (NTRK3) from Homo sapiens (Human).